The following is a 33-amino-acid chain: Cytochrome b6-f complex subunit 8 (33 aa).

Residues 2 to 22 (LFTVAWASLAAMFSFSIAMVV) traverse the membrane as a helical segment.

This sequence belongs to the PetN family. As to quaternary structure, the 4 large subunits of the cytochrome b6-f complex are cytochrome b6, subunit IV (17 kDa polypeptide, PetD), cytochrome f and the Rieske protein, while the 4 small subunits are PetG, PetL, PetM and PetN. The complex functions as a dimer.

It localises to the cellular thylakoid membrane. In terms of biological role, component of the cytochrome b6-f complex, which mediates electron transfer between photosystem II (PSII) and photosystem I (PSI), cyclic electron flow around PSI, and state transitions. The sequence is that of Cytochrome b6-f complex subunit 8 from Synechococcus sp. (strain CC9902).